Here is a 400-residue protein sequence, read N- to C-terminus: Forkhead box protein A4-B (400 aa).

The fork-head DNA-binding region spans 119–213 (KPPYSYISLI…ENGCYLRRQK (95 aa)). The span at 218-234 (ERSKSGEGERKGNKPGD) shows a compositional bias: basic and acidic residues. The disordered stretch occupies residues 218-290 (ERSKSGEGER…VGFSPTSEQA (73 aa)). Polar residues-rich tracts occupy residues 249 to 258 (DCSSSRSPQA) and 267 to 277 (STGSSIHQATG).

In terms of tissue distribution, primarily expressed in the dorsal blastopore lip (Spemann organizer) of early gastrulae. At later stages, expressed in the dorsal mesoderm and the neural floor plate. In the dorsal mesoderm, expressed in the notochord but not in the presomitic mesoderm. Also expressed in the mid-brain area.

It is found in the nucleus. Functionally, transcriptional repressor involved in embryonic nervous system development. Plays a role in the induction and patterning of the anterior-posterior neural axis. Involved in the establishment of floor plate differentiation from neural plate cells during gastrulation. Binds the anf1 promoter sequence to restrict expression of anf1 to the anterior of the neural plate, thereby patterning the forebrain. Can bind to the HNF-3-alpha DNA target sequence. Cooperates with t/bra in a dose-dependent manner to specify dorsal mesoderm formation, including notochord. May be involved in the dorso-ventral patterning of the mesoderm. Binds to DNA via the target sequence 5'-[GA]TAAA[TC]A-3', with 5'-GTAAATA-3' being the preferred binding site. In Xenopus laevis (African clawed frog), this protein is Forkhead box protein A4-B (foxa4-b).